A 58-amino-acid polypeptide reads, in one-letter code: Proteinase inhibitor PSKP-1 (58 aa).

The Kazal-like domain maps to 1–58 (VIEPKCYKYEGKKCPPDINPVCGTDKRTYYNECALCVFIRQSTKKADKAIKIKKWGKC). 3 disulfides stabilise this stretch: Cys-6-Cys-36, Cys-14-Cys-33, and Cys-22-Cys-58.

In terms of assembly, monomer. As to expression, skin.

Its subcellular location is the secreted. In terms of biological role, has antibacterial activity against Gram-negative bacterium E.coli ATCC 11229. Shows hemagglutinating activity. Inhibits prolyl endopeptidase, but not trypsin, chymotrypsin, V8 protease and proteinase K. May have a role in mucosal defense against microbes by interacting directly with their membranes. This chain is Proteinase inhibitor PSKP-1, found in Phyllomedusa sauvagei (Sauvage's leaf frog).